The chain runs to 55 residues: Large ribosomal subunit protein bL33 (55 aa).

The protein belongs to the bacterial ribosomal protein bL33 family.

This is Large ribosomal subunit protein bL33 from Bordetella pertussis (strain Tohama I / ATCC BAA-589 / NCTC 13251).